The sequence spans 320 residues: GMP reductase (320 aa).

Catalysis depends on C174, which acts as the Thioimidate intermediate. An NADP(+)-binding site is contributed by I203 to C226.

The protein belongs to the IMPDH/GMPR family. GuaC type 2 subfamily.

It carries out the reaction IMP + NH4(+) + NADP(+) = GMP + NADPH + 2 H(+). Its function is as follows. Catalyzes the irreversible NADPH-dependent deamination of GMP to IMP. It functions in the conversion of nucleobase, nucleoside and nucleotide derivatives of G to A nucleotides, and in maintaining the intracellular balance of A and G nucleotides. This chain is GMP reductase, found in Mesoplasma florum (strain ATCC 33453 / NBRC 100688 / NCTC 11704 / L1) (Acholeplasma florum).